A 149-amino-acid chain; its full sequence is ATP synthase epsilon chain (149 aa).

Basic and acidic residues-rich tracts occupy residues 99 to 116 (DVER…RLEE) and 123 to 134 (RETHEAARDRAR). Positions 99-149 (DVERAESAEERAKRRLEEGVQEEERETHEAARDRARNRLRVAMGKVGTRQS) are disordered.

The protein belongs to the ATPase epsilon chain family. As to quaternary structure, F-type ATPases have 2 components, CF(1) - the catalytic core - and CF(0) - the membrane proton channel. CF(1) has five subunits: alpha(3), beta(3), gamma(1), delta(1), epsilon(1). CF(0) has three main subunits: a, b and c.

It localises to the cell inner membrane. Functionally, produces ATP from ADP in the presence of a proton gradient across the membrane. This is ATP synthase epsilon chain from Salinibacter ruber (strain DSM 13855 / M31).